Reading from the N-terminus, the 144-residue chain is MCGCRASVPSTKHYSVNPAPTTRSPPAAAGMPKRIPIAKQLASIKALEKGSDLEKAFATAALVYNNSADPEGKLSKAETKSLLQTQFSRFIQGQENKPKYQEMISALDEEPEKKIDFEDFMISLVSLALLSDLLQEIKNVKSTK.

The disordered stretch occupies residues 1–31 (MCGCRASVPSTKHYSVNPAPTTRSPPAAAGM). Over residues 18–29 (PAPTTRSPPAAA) the composition is skewed to low complexity.

Belongs to the S-100 family.

The protein localises to the cell projection. It localises to the cilium. Its function is as follows. May be a component of the linker structure that bridges the ciliary membrane and peripheral singlet microtubules. In Gallus gallus (Chicken), this protein is Sentan.